Reading from the N-terminus, the 526-residue chain is AAA ATPase forming ring-shaped complexes (526 aa).

A compositionally biased stretch (polar residues) spans 1–18 (MGDMASSTDPAAHNSFSD). The interval 1–20 (MGDMASSTDPAAHNSFSDFN) is disordered. The stretch at 20–59 (NREEMTRLADNVRSLQRTNQDLSARNTKLAEMLKSSRDKL) forms a coiled coil. Position 257–262 (257–262 (GCGKTL)) interacts with ATP.

It belongs to the AAA ATPase family. As to quaternary structure, homohexamer. Assembles into a hexameric ring structure.

The protein is AAA ATPase forming ring-shaped complexes of Corynebacterium efficiens (strain DSM 44549 / YS-314 / AJ 12310 / JCM 11189 / NBRC 100395).